Consider the following 97-residue polypeptide: MALLVSAYKSAKKDELYLFVPKEDGLEKLSDELLVMFGEPQHVIDFDLTEKRKLARVDAEEVKKALETKGYFMQMPPSEIEKMGDMPPPPEHLDNIF.

The YcgL domain occupies Leu-3–Pro-87. Residues Ser-78 to Phe-97 are disordered.

The chain is YcgL domain-containing protein Tcr_0238 from Hydrogenovibrio crunogenus (strain DSM 25203 / XCL-2) (Thiomicrospira crunogena).